We begin with the raw amino-acid sequence, 83 residues long: Cytochrome c5 (83 aa).

Residues Cys15, Cys18, His19, and Met59 each coordinate heme c. A disulfide bridge links Cys65 with Cys68.

It belongs to the cytochrome c family. Homodimer. Post-translationally, binds 1 heme c group covalently per subunit.

Its function is as follows. It is unreactive with cytochrome c reductase or oxidase. This chain is Cytochrome c5, found in Azotobacter vinelandii.